The chain runs to 407 residues: Probable tRNA sulfurtransferase (407 aa).

The 105-residue stretch at Asn61–Val165 folds into the THUMP domain. ATP is bound by residues Met183–Leu184, His208–Phe209, Arg265, Gly287, and Gln296.

Belongs to the ThiI family.

The protein localises to the cytoplasm. The enzyme catalyses [ThiI sulfur-carrier protein]-S-sulfanyl-L-cysteine + a uridine in tRNA + 2 reduced [2Fe-2S]-[ferredoxin] + ATP + H(+) = [ThiI sulfur-carrier protein]-L-cysteine + a 4-thiouridine in tRNA + 2 oxidized [2Fe-2S]-[ferredoxin] + AMP + diphosphate. The catalysed reaction is [ThiS sulfur-carrier protein]-C-terminal Gly-Gly-AMP + S-sulfanyl-L-cysteinyl-[cysteine desulfurase] + AH2 = [ThiS sulfur-carrier protein]-C-terminal-Gly-aminoethanethioate + L-cysteinyl-[cysteine desulfurase] + A + AMP + 2 H(+). It participates in cofactor biosynthesis; thiamine diphosphate biosynthesis. In terms of biological role, catalyzes the ATP-dependent transfer of a sulfur to tRNA to produce 4-thiouridine in position 8 of tRNAs, which functions as a near-UV photosensor. Also catalyzes the transfer of sulfur to the sulfur carrier protein ThiS, forming ThiS-thiocarboxylate. This is a step in the synthesis of thiazole, in the thiamine biosynthesis pathway. The sulfur is donated as persulfide by IscS. The chain is Probable tRNA sulfurtransferase from Staphylococcus aureus (strain MSSA476).